Consider the following 345-residue polypeptide: Molybdate/tungstate-binding protein WtpA (345 aa).

Residues 1 to 27 form the signal peptide; sequence MREGGVMKKRLLALIVAFAVLTAGCLG. Residues 41-42, Ser75, 160-162, Glu218, and Tyr236 contribute to the molybdate site; these read GS and DPC. Residues 41-42, Ser75, 160-162, Glu218, and Tyr236 each bind tungstate; these read GS and DPC.

Belongs to the bacterial solute-binding protein 1 family. WtpA subfamily. In terms of assembly, monomer. The complex is composed of two ATP-binding proteins (WtpC), two transmembrane proteins (WtpB) and a solute-binding protein (WtpA).

It localises to the cell membrane. Its function is as follows. Part of the ABC transporter complex WtpABC involved in molybdate/tungstate import. Binds tungstate and molybdate, with a preference for tungstate. The polypeptide is Molybdate/tungstate-binding protein WtpA (Pyrococcus furiosus (strain ATCC 43587 / DSM 3638 / JCM 8422 / Vc1)).